A 206-amino-acid polypeptide reads, in one-letter code: Large ribosomal subunit protein uL4 (206 aa).

The tract at residues 43-78 (ARSGNRKQKDREEVKHTTKKPWRQKGTGRARAGMSS) is disordered. Residues 49 to 58 (KQKDREEVKH) are compositionally biased toward basic and acidic residues. A compositionally biased stretch (basic residues) spans 59-70 (TTKKPWRQKGTG).

It belongs to the universal ribosomal protein uL4 family. As to quaternary structure, part of the 50S ribosomal subunit.

In terms of biological role, one of the primary rRNA binding proteins, this protein initially binds near the 5'-end of the 23S rRNA. It is important during the early stages of 50S assembly. It makes multiple contacts with different domains of the 23S rRNA in the assembled 50S subunit and ribosome. Forms part of the polypeptide exit tunnel. This is Large ribosomal subunit protein uL4 from Cupriavidus pinatubonensis (strain JMP 134 / LMG 1197) (Cupriavidus necator (strain JMP 134)).